The primary structure comprises 345 residues: S-adenosylmethionine:tRNA ribosyltransferase-isomerase (345 aa).

Belongs to the QueA family. Monomer.

It is found in the cytoplasm. The enzyme catalyses 7-aminomethyl-7-carbaguanosine(34) in tRNA + S-adenosyl-L-methionine = epoxyqueuosine(34) in tRNA + adenine + L-methionine + 2 H(+). The protein operates within tRNA modification; tRNA-queuosine biosynthesis. Transfers and isomerizes the ribose moiety from AdoMet to the 7-aminomethyl group of 7-deazaguanine (preQ1-tRNA) to give epoxyqueuosine (oQ-tRNA). This Lactococcus lactis subsp. lactis (strain IL1403) (Streptococcus lactis) protein is S-adenosylmethionine:tRNA ribosyltransferase-isomerase.